A 310-amino-acid polypeptide reads, in one-letter code: Uracil phosphoribosyltransferase homolog (310 aa).

Disordered stretches follow at residues 1–27 and 62–89; these read MASE…PSPE and SERD…GNYD. The span at 16–25 shows a compositional bias: polar residues; sequence RQVNSTSSPS. S25 carries the post-translational modification Phosphoserine. Residues R134, R143, and 177–180 each bind GTP; that span reads EKGN. R187 is a binding site for 5-phospho-alpha-D-ribose 1-diphosphate. Residues R204 and R233 each coordinate GTP. 5-phospho-alpha-D-ribose 1-diphosphate is bound at residue 239 to 247; it reads YPILSTGNT. 300–302 serves as a coordination point for uracil; the sequence is THF.

Belongs to the UPRTase family.

It is found in the cytoplasm. The protein localises to the nucleus. The chain is Uracil phosphoribosyltransferase homolog (Uprt) from Mus musculus (Mouse).